We begin with the raw amino-acid sequence, 460 residues long: Putative E3 ubiquitin-protein ligase RING1b (460 aa).

Positions 1 to 85 are disordered; it reads MPSLKSFSAA…SQSSSAGELS (85 aa). Over residues 21 to 31 the composition is skewed to basic and acidic residues; sequence SEAERFNPEAV. 2 stretches are compositionally biased toward acidic residues: residues 32–51 and 59–71; these read EKEE…DEED and EAED…EEED. The RING-type zinc finger occupies 103 to 143; sequence CSICLGIIRKTRTVMECLHRFCRECIDKSMRLGNNECPTCR. A disordered region spans residues 196-300; sequence QVSQRQSKAL…TEQTHQRDSR (105 aa). Basic residues predominate over residues 220 to 234; it reads RSRRSGGGSRRRRNC. Residues 240–249 show a composition bias toward acidic residues; it reads DTSEANDDDD. Residues 250 to 265 are compositionally biased toward basic and acidic residues; the sequence is QNKRGKDSSSDEPCER. Residues 276–290 are compositionally biased toward low complexity; the sequence is SSSNANNNDNCAGNG.

As to quaternary structure, heterodimer with RING1A. Interacts with CLF. Component of the PRC1-like complex, at least composed of RING1A, RING1B and LHP1.

The protein resides in the nucleus. It carries out the reaction S-ubiquitinyl-[E2 ubiquitin-conjugating enzyme]-L-cysteine + [acceptor protein]-L-lysine = [E2 ubiquitin-conjugating enzyme]-L-cysteine + N(6)-ubiquitinyl-[acceptor protein]-L-lysine.. It functions in the pathway protein modification; protein ubiquitination. Putative E3 ubiquitin-protein ligase that mediates monoubiquitination of 'Lys-119' of histone H2A (H2AK119ub), thereby playing a central role in histone code and gene regulation. Functionally, as part of the PRC1-like complex, repress class I KNOX gene expression. PcG PRC1 complex maintains the transcriptionally repressive state of many genes, including Hox genes, throughout development. PcG PRC1 complex acts via chromatin remodeling and modification of histones, rendering chromatin heritably changed in its expressibility. This chain is Putative E3 ubiquitin-protein ligase RING1b (RING1B), found in Arabidopsis thaliana (Mouse-ear cress).